We begin with the raw amino-acid sequence, 176 residues long: ATP-dependent protease subunit HslV (176 aa).

Residue T5 is part of the active site. Na(+) contacts are provided by A161, C164, and T167.

Belongs to the peptidase T1B family. HslV subfamily. In terms of assembly, a double ring-shaped homohexamer of HslV is capped on each side by a ring-shaped HslU homohexamer. The assembly of the HslU/HslV complex is dependent on binding of ATP.

Its subcellular location is the cytoplasm. It catalyses the reaction ATP-dependent cleavage of peptide bonds with broad specificity.. Allosterically activated by HslU binding. Functionally, protease subunit of a proteasome-like degradation complex believed to be a general protein degrading machinery. The chain is ATP-dependent protease subunit HslV from Caldicellulosiruptor bescii (strain ATCC BAA-1888 / DSM 6725 / KCTC 15123 / Z-1320) (Anaerocellum thermophilum).